The primary structure comprises 142 residues: Large ribosomal subunit protein uL13 (142 aa).

This sequence belongs to the universal ribosomal protein uL13 family. In terms of assembly, part of the 50S ribosomal subunit.

In terms of biological role, this protein is one of the early assembly proteins of the 50S ribosomal subunit, although it is not seen to bind rRNA by itself. It is important during the early stages of 50S assembly. This chain is Large ribosomal subunit protein uL13, found in Psychrobacter sp. (strain PRwf-1).